The primary structure comprises 297 residues: Elongation factor Ts (297 aa).

The involved in Mg(2+) ion dislocation from EF-Tu stretch occupies residues threonine 82–valine 85. Positions alanine 223–valine 265 are enriched in low complexity. The tract at residues alanine 223 to lysine 297 is disordered. The segment covering serine 286–lysine 297 has biased composition (basic residues).

It belongs to the EF-Ts family.

The protein resides in the cytoplasm. Associates with the EF-Tu.GDP complex and induces the exchange of GDP to GTP. It remains bound to the aminoacyl-tRNA.EF-Tu.GTP complex up to the GTP hydrolysis stage on the ribosome. This chain is Elongation factor Ts, found in Thermosynechococcus vestitus (strain NIES-2133 / IAM M-273 / BP-1).